The chain runs to 430 residues: Glutamate-1-semialdehyde 2,1-aminomutase (430 aa).

Lys-265 is modified (N6-(pyridoxal phosphate)lysine).

The protein belongs to the class-III pyridoxal-phosphate-dependent aminotransferase family. HemL subfamily. In terms of assembly, homodimer. Pyridoxal 5'-phosphate serves as cofactor.

It localises to the cytoplasm. The catalysed reaction is (S)-4-amino-5-oxopentanoate = 5-aminolevulinate. It participates in porphyrin-containing compound metabolism; protoporphyrin-IX biosynthesis; 5-aminolevulinate from L-glutamyl-tRNA(Glu): step 2/2. The chain is Glutamate-1-semialdehyde 2,1-aminomutase from Shewanella baltica (strain OS195).